The sequence spans 486 residues: MSKDIRVRYAPSPTGLLHIGNARTALFNYLYARHHGGTFLIRIEDTDRKRHVEDGERSQLENLRWLGMDWDESPESHENYRQSERLDLYQKYIDQLLAEGKAYKSYVTEEELAAERERQEVAGETPRYINEYLGMSEEEKAAYIAEREAAGIIPTVRLAVNESGIYKWHDMVKGDIEFEGGNIGGDWVIQKKDGYPTYNFAVVIDDHDMQISHVIRGDDHIANTPKQLMVYEALGWEAPEFGHMTLIINSETGKKLSKRDTNTLQFIEDYRKKGYLPEAVFNFIALLGWNPGGEDEIFSREELIKLFDENRLSKSPAAFDQKKLDWMSNDYIKNADLETIFEMAKPFLEEAGRLTDKAEKLVELYKPQMKSVDEIIPLTDLFFSDFPELTEAEREVMTGETVPTVLEAFKAKLEAMTDDEFVTENIFPQIKAVQKETGIKGKNLFMPIRIAVSGEMHGPELPDTIFLLGREKSIQHIENMLKEISK.

Residues 11–21 carry the 'HIGH' region motif; it reads PSPTGLLHIGN. The 'KMSKS' region signature appears at 255-259; sequence KLSKR. Lys258 provides a ligand contact to ATP.

It belongs to the class-I aminoacyl-tRNA synthetase family. Glutamate--tRNA ligase type 1 subfamily. As to quaternary structure, monomer.

It is found in the cytoplasm. It carries out the reaction tRNA(Glu) + L-glutamate + ATP = L-glutamyl-tRNA(Glu) + AMP + diphosphate. Catalyzes the attachment of glutamate to tRNA(Glu) in a two-step reaction: glutamate is first activated by ATP to form Glu-AMP and then transferred to the acceptor end of tRNA(Glu). The protein is Glutamate--tRNA ligase of Streptococcus pneumoniae serotype 19F (strain G54).